Reading from the N-terminus, the 399-residue chain is Enoyl-[acyl-carrier-protein] reductase [NADH] (399 aa).

Residues 48–53, 74–75, 111–112, and 139–140 contribute to the NAD(+) site; these read GASTGY, FE, DA, and LA. Tyrosine 225 is a binding site for substrate. The active-site Proton donor is tyrosine 235. NAD(+)-binding positions include lysine 244 and 273-275; that span reads VVT.

It belongs to the TER reductase family. Monomer.

The catalysed reaction is a 2,3-saturated acyl-[ACP] + NAD(+) = a (2E)-enoyl-[ACP] + NADH + H(+). It participates in lipid metabolism; fatty acid biosynthesis. Functionally, involved in the final reduction of the elongation cycle of fatty acid synthesis (FAS II). Catalyzes the reduction of a carbon-carbon double bond in an enoyl moiety that is covalently linked to an acyl carrier protein (ACP). In Serratia proteamaculans (strain 568), this protein is Enoyl-[acyl-carrier-protein] reductase [NADH].